Consider the following 30-residue polypeptide: Cysteine-rich venom protein okinavin (30 aa).

The disordered stretch occupies residues 1–30; that stretch reads SVDFDSESPRKPXIQNEIVDLHNPLRRXVN.

The protein belongs to the CRISP family. Post-translationally, contains 8 disulfide bonds. Expressed by the venom gland.

The protein localises to the secreted. Inhibits calcium-activated potassium channels (KCa), voltage-gated potassium channel (Kv), and the calcium release channel/ryanodine receptor (RyR). The polypeptide is Cysteine-rich venom protein okinavin (Ovophis okinavensis (Ryukyu Island pit viper)).